We begin with the raw amino-acid sequence, 398 residues long: 1-deoxy-D-xylulose 5-phosphate reductoisomerase (398 aa).

NADPH-binding residues include T11, G12, S13, I14, R38, N39, and N125. Residue K126 participates in 1-deoxy-D-xylulose 5-phosphate binding. E127 serves as a coordination point for NADPH. D151 is a Mn(2+) binding site. S152, E153, S179, and H202 together coordinate 1-deoxy-D-xylulose 5-phosphate. Residue E153 coordinates Mn(2+). Residue G208 coordinates NADPH. The 1-deoxy-D-xylulose 5-phosphate site is built by S215, N220, K221, and E224. Residue E224 coordinates Mn(2+).

The protein belongs to the DXR family. It depends on Mg(2+) as a cofactor. Requires Mn(2+) as cofactor.

The catalysed reaction is 2-C-methyl-D-erythritol 4-phosphate + NADP(+) = 1-deoxy-D-xylulose 5-phosphate + NADPH + H(+). Its pathway is isoprenoid biosynthesis; isopentenyl diphosphate biosynthesis via DXP pathway; isopentenyl diphosphate from 1-deoxy-D-xylulose 5-phosphate: step 1/6. Functionally, catalyzes the NADPH-dependent rearrangement and reduction of 1-deoxy-D-xylulose-5-phosphate (DXP) to 2-C-methyl-D-erythritol 4-phosphate (MEP). The polypeptide is 1-deoxy-D-xylulose 5-phosphate reductoisomerase (Burkholderia multivorans (strain ATCC 17616 / 249)).